The sequence spans 265 residues: Cell division protein DivIB (265 aa).

At 1-30 (MKNSKVIKLQDRVPKLKNQQKKKKKNVNHR) the chain is on the cytoplasmic side. A helical membrane pass occupies residues 31–51 (LILYISILFLLVLFLIYFRSP). The Extracellular portion of the chain corresponds to 52-265 (LSNIKKISVF…NRMIVFNTLS (214 aa)). The region spanning 53–121 (SNIKKISVFG…NKIDVHIEEY (69 aa)) is the POTRA domain.

Belongs to the FtsQ/DivIB family. DivIB subfamily.

Its subcellular location is the cell membrane. Its function is as follows. Cell division protein that may be involved in stabilizing or promoting the assembly of the division complex. The chain is Cell division protein DivIB from Bacillus anthracis.